The following is a 117-amino-acid chain: Large ribosomal subunit protein uL18 (117 aa).

It belongs to the universal ribosomal protein uL18 family. Part of the 50S ribosomal subunit; part of the 5S rRNA/L5/L18/L25 subcomplex. Contacts the 5S and 23S rRNAs.

Its function is as follows. This is one of the proteins that bind and probably mediate the attachment of the 5S RNA into the large ribosomal subunit, where it forms part of the central protuberance. The polypeptide is Large ribosomal subunit protein uL18 (Vibrio atlanticus (strain LGP32) (Vibrio splendidus (strain Mel32))).